Reading from the N-terminus, the 185-residue chain is Stathmin-4 (185 aa).

The SLD domain maps to 48 to 185 (SDMEVIELNK…EVRKNKEATR (138 aa)). Residues 90-185 (SLEEIQKKLE…EVRKNKEATR (96 aa)) adopt a coiled-coil conformation. The disordered stretch occupies residues 165–185 (ERLQEKDKHAEEVRKNKEATR). The span at 166 to 185 (RLQEKDKHAEEVRKNKEATR) shows a compositional bias: basic and acidic residues.

It belongs to the stathmin family. Nervous tissue.

In Xenopus laevis (African clawed frog), this protein is Stathmin-4 (stmn4).